Reading from the N-terminus, the 750-residue chain is Photosystem I P700 chlorophyll a apoprotein A1 (750 aa).

8 helical membrane-spanning segments follow: residues 70–93, 156–179, 195–219, 291–309, 346–369, 385–411, 433–455, and 531–549; these read VFSA…FHGA, LYCT…FHYH, LNHH…HVSL, IAHH…GHMY, WHAQ…HHMY, LSLF…IFMV, AIIS…LYIH, and FLVH…LILL. [4Fe-4S] cluster contacts are provided by C573 and C582. Helical transmembrane passes span 589–610 and 664–686; these read HVFL…HFSW and LSAY…MFLF. H675 is a binding site for chlorophyll a'. 2 residues coordinate chlorophyll a: M683 and Y691. A phylloquinone-binding site is contributed by W692. A helical transmembrane segment spans residues 724–744; it reads AVGVTHYLLGGIATTWAFFLA.

It belongs to the PsaA/PsaB family. The PsaA/B heterodimer binds the P700 chlorophyll special pair and subsequent electron acceptors. PSI consists of a core antenna complex that captures photons, and an electron transfer chain that converts photonic excitation into a charge separation. The eukaryotic PSI reaction center is composed of at least 11 subunits. P700 is a chlorophyll a/chlorophyll a' dimer, A0 is one or more chlorophyll a, A1 is one or both phylloquinones and FX is a shared 4Fe-4S iron-sulfur center. serves as cofactor.

It is found in the plastid. The protein localises to the chloroplast thylakoid membrane. It carries out the reaction reduced [plastocyanin] + hnu + oxidized [2Fe-2S]-[ferredoxin] = oxidized [plastocyanin] + reduced [2Fe-2S]-[ferredoxin]. PsaA and PsaB bind P700, the primary electron donor of photosystem I (PSI), as well as the electron acceptors A0, A1 and FX. PSI is a plastocyanin-ferredoxin oxidoreductase, converting photonic excitation into a charge separation, which transfers an electron from the donor P700 chlorophyll pair to the spectroscopically characterized acceptors A0, A1, FX, FA and FB in turn. Oxidized P700 is reduced on the lumenal side of the thylakoid membrane by plastocyanin. In Draba nemorosa (Woodland whitlowgrass), this protein is Photosystem I P700 chlorophyll a apoprotein A1.